The primary structure comprises 83 residues: Small ribosomal subunit protein bS18 (83 aa).

The protein belongs to the bacterial ribosomal protein bS18 family. In terms of assembly, part of the 30S ribosomal subunit. Forms a tight heterodimer with protein bS6.

Functionally, binds as a heterodimer with protein bS6 to the central domain of the 16S rRNA, where it helps stabilize the platform of the 30S subunit. The chain is Small ribosomal subunit protein bS18 from Methylobacterium radiotolerans (strain ATCC 27329 / DSM 1819 / JCM 2831 / NBRC 15690 / NCIMB 10815 / 0-1).